The sequence spans 705 residues: Pentatricopeptide repeat-containing protein At1g09410, mitochondrial (705 aa).

The transit peptide at 1 to 11 directs the protein to the mitochondrion; that stretch reads MKSQILLRRTY. 15 PPR repeats span residues 16–46, 47–77, 78–112, 113–139, 140–170, 171–205, 206–232, 233–267, 268–294, 295–329, 330–364, 365–395, 396–430, 432–462, and 468–498; these read PPPT…CDSK, SISS…MPDR, NIIS…NVVS, WTAL…MPEK, NKVS…IPDK, DNIA…SVIT, WTTM…MPEK, TEVS…PVIA, CNAM…MKER, NDAS…GVRP, TFPT…QFDV, DVYV…FPSK, DIIM…GSTK, NEVT…MESV, and ITAH…MTVE. Residues 503-578 form a type E motif region; the sequence is VWGSLLGACR…SPGCSWTEVE (76 aa). Residues 579–610 form a type E(+) motif region; sequence NKVHAFTRGGINSHPEQESILKILDELDGLLR. The segment at 611–705 is type DYW motif; the sequence is EAGYNPDCSY…NGECSCKDYW (95 aa).

This sequence belongs to the PPR family. PCMP-H subfamily.

The protein resides in the mitochondrion. This Arabidopsis thaliana (Mouse-ear cress) protein is Pentatricopeptide repeat-containing protein At1g09410, mitochondrial (PCMP-H18).